Consider the following 107-residue polypeptide: Phosphoribosyl-ATP pyrophosphatase (107 aa).

This sequence belongs to the PRA-PH family.

It is found in the cytoplasm. It catalyses the reaction 1-(5-phospho-beta-D-ribosyl)-ATP + H2O = 1-(5-phospho-beta-D-ribosyl)-5'-AMP + diphosphate + H(+). It functions in the pathway amino-acid biosynthesis; L-histidine biosynthesis; L-histidine from 5-phospho-alpha-D-ribose 1-diphosphate: step 2/9. The chain is Phosphoribosyl-ATP pyrophosphatase (hisE) from Neisseria meningitidis serogroup A / serotype 4A (strain DSM 15465 / Z2491).